Consider the following 279-residue polypeptide: S-methyl-5'-thioadenosine phosphorylase (279 aa).

Phosphate contacts are provided by residues Ser28, 70 to 71 (RH), and 103 to 104 (SA). Met202 lines the substrate pocket. A phosphate-binding site is contributed by Thr203. 226–228 (DYD) is a binding site for substrate.

This sequence belongs to the PNP/MTAP phosphorylase family. MTAP subfamily. In terms of assembly, homohexamer. Dimer of a homotrimer.

It carries out the reaction S-methyl-5'-thioadenosine + phosphate = 5-(methylsulfanyl)-alpha-D-ribose 1-phosphate + adenine. It participates in amino-acid biosynthesis; L-methionine biosynthesis via salvage pathway; S-methyl-5-thio-alpha-D-ribose 1-phosphate from S-methyl-5'-thioadenosine (phosphorylase route): step 1/1. Its function is as follows. Catalyzes the reversible phosphorylation of S-methyl-5'-thioadenosine (MTA) to adenine and 5-methylthioribose-1-phosphate. Involved in the breakdown of MTA, a major by-product of polyamine biosynthesis. Responsible for the first step in the methionine salvage pathway after MTA has been generated from S-adenosylmethionine. Has broad substrate specificity with 6-aminopurine nucleosides as preferred substrates. The chain is S-methyl-5'-thioadenosine phosphorylase from Pyrobaculum aerophilum (strain ATCC 51768 / DSM 7523 / JCM 9630 / CIP 104966 / NBRC 100827 / IM2).